Reading from the N-terminus, the 160-residue chain is Cytochrome b6-f complex subunit 4 (160 aa).

Helical transmembrane passes span 36–56 (LLYV…GLAI), 95–115 (LLGV…PFIE), and 131–151 (TVFL…TMPI).

The protein belongs to the cytochrome b family. PetD subfamily. The 4 large subunits of the cytochrome b6-f complex are cytochrome b6, subunit IV (17 kDa polypeptide, petD), cytochrome f and the Rieske protein, while the 4 small subunits are petG, petL, petM and petN. The complex functions as a dimer.

The protein resides in the plastid. It is found in the chloroplast thylakoid membrane. Its function is as follows. Component of the cytochrome b6-f complex, which mediates electron transfer between photosystem II (PSII) and photosystem I (PSI), cyclic electron flow around PSI, and state transitions. The protein is Cytochrome b6-f complex subunit 4 of Pyropia yezoensis (Susabi-nori).